The chain runs to 166 residues: UPF0254 protein Maeo_0668 (166 aa).

Belongs to the UPF0254 family.

The protein is UPF0254 protein Maeo_0668 of Methanococcus aeolicus (strain ATCC BAA-1280 / DSM 17508 / OCM 812 / Nankai-3).